The sequence spans 771 residues: Choline transporter-like protein 1 (771 aa).

Residues 96–116 traverse the membrane as a helical segment; that stretch reads FLFFVFLCGWVVVAGFGIMWG. N141 and N259 each carry an N-linked (GlcNAc...) asparagine glycan. The next 4 membrane-spanning stretches (helical) occupy residues 312-332, 335-355, 392-412, and 441-461; these read WWQT…WTVI, LLGS…LGFG, LVVA…ILFI, and LFPF…AIWL. An N-linked (GlcNAc...) asparagine glycan is attached at N480. 5 helical membrane-spanning segments follow: residues 514 to 534, 566 to 586, 603 to 623, 662 to 682, and 701 to 721; these read LFAF…ALAG, LGSI…RVLL, WFLM…KFLT, AGIL…ILSF, and YYFV…DLFF.

Belongs to the CTL (choline transporter-like) family.

The protein localises to the membrane. The protein is Choline transporter-like protein 1 (chtl-1) of Caenorhabditis elegans.